The sequence spans 433 residues: Probable M18 family aminopeptidase 2 (433 aa).

Residues H84, H161, and H409 each coordinate Zn(2+).

This sequence belongs to the peptidase M18 family. The cofactor is Zn(2+).

In Clostridium novyi (strain NT), this protein is Probable M18 family aminopeptidase 2.